The sequence spans 185 residues: Elongation factor P (185 aa).

It belongs to the elongation factor P family.

It localises to the cytoplasm. It functions in the pathway protein biosynthesis; polypeptide chain elongation. Functionally, involved in peptide bond synthesis. Stimulates efficient translation and peptide-bond synthesis on native or reconstituted 70S ribosomes in vitro. Probably functions indirectly by altering the affinity of the ribosome for aminoacyl-tRNA, thus increasing their reactivity as acceptors for peptidyl transferase. This Nitratidesulfovibrio vulgaris (strain DP4) (Desulfovibrio vulgaris) protein is Elongation factor P.